Consider the following 395-residue polypeptide: MSVIPSSRPVSTLAPDNDFREIHNWTELLHLFNQTFSDCHMELNENTKQVVLFVFYLAIFVVGLVENVLVICVNCRRSGRVGMLNLYILNMAVADLGIILSLPVWMLEVMLEYTWLWGSFSCRFIHYFYLANMYSSIFFLTCLSIDRYVTLTNTSPSWQRHQHRIRRAVCAGVWVLSAIIPLPEVVHIQLLDGSEPMCLFLAPFETYSAWALAVALSATILGFLLPFPLIAVFNILSACRLRRQGQTESRRHCLLMWAYIVVFVICWLPYHVTMLLLTLHTTHIFLHCNLVNFLYFFYEIIDCFSMLHCVANPILYNFLSPSFRGRLLSLVVRYLPKEQARAAGGRASSSSSTQHSIIITKEGSLPLQRICTPTPSETCRPPLCLRTPHLHSAIP.

Topologically, residues 1–53 are extracellular; that stretch reads MSVIPSSRPVSTLAPDNDFREIHNWTELLHLFNQTFSDCHMELNENTKQVVLF. 2 N-linked (GlcNAc...) asparagine glycosylation sites follow: N24 and N33. A helical membrane pass occupies residues 54–75; it reads VFYLAIFVVGLVENVLVICVNC. At 76 to 86 the chain is on the cytoplasmic side; sequence RRSGRVGMLNL. A helical transmembrane segment spans residues 87 to 109; sequence YILNMAVADLGIILSLPVWMLEV. Over 110–123 the chain is Extracellular; it reads MLEYTWLWGSFSCR. C122 and C198 are disulfide-bonded. A helical transmembrane segment spans residues 124–145; sequence FIHYFYLANMYSSIFFLTCLSI. Topologically, residues 146–166 are cytoplasmic; it reads DRYVTLTNTSPSWQRHQHRIR. A helical transmembrane segment spans residues 167-189; sequence RAVCAGVWVLSAIIPLPEVVHIQ. Over 190 to 213 the chain is Extracellular; the sequence is LLDGSEPMCLFLAPFETYSAWALA. The helical transmembrane segment at 214 to 235 threads the bilayer; that stretch reads VALSATILGFLLPFPLIAVFNI. The Cytoplasmic portion of the chain corresponds to 236–254; sequence LSACRLRRQGQTESRRHCL. Residues 255 to 276 form a helical membrane-spanning segment; that stretch reads LMWAYIVVFVICWLPYHVTMLL. Over 277–295 the chain is Extracellular; it reads LTLHTTHIFLHCNLVNFLY. The chain crosses the membrane as a helical span at residues 296 to 316; it reads FFYEIIDCFSMLHCVANPILY. The Cytoplasmic portion of the chain corresponds to 317–395; that stretch reads NFLSPSFRGR…RTPHLHSAIP (79 aa). S329 is modified (phosphoserine).

This sequence belongs to the G-protein coupled receptor 1 family. Expressed in a wide variety of peripheral tissues in the adult rat with prominent expression in lung, testis, adrenal and liver.

Its subcellular location is the cell membrane. Its function is as follows. Orphan receptor. In Rattus norvegicus (Rat), this protein is G-protein coupled receptor 182 (Gpr182).